Reading from the N-terminus, the 418-residue chain is Alditol oxidase (418 aa).

In terms of domain architecture, FAD-binding PCMH-type spans 13–179 (ITYTAKELLR…TSLTLDLEPA (167 aa)). Residues 41 to 47 (VLGSGHS), Ser-106, Ser-111, Gly-114, 118 to 121 (TGTH), and Val-169 contribute to the FAD site. His-46 carries the pros-8alpha-FAD histidine modification. Ser-106 is a D-sorbitol binding site. Xylitol is bound at residue Ser-106. Glu-320, Arg-322, and Thr-345 together coordinate D-sorbitol. Xylitol-binding residues include Glu-320, Arg-322, and Thr-345. Residue Arg-322 participates in FAD binding. His-372 contributes to the FAD binding site. Lys-375 is a binding site for D-sorbitol. Lys-375 is a xylitol binding site.

Belongs to the oxygen-dependent FAD-linked oxidoreductase family. As to quaternary structure, monomer. The cofactor is FAD.

The catalysed reaction is an alditol + O2 = an aldose + H2O2. It carries out the reaction xylitol + O2 = D-xylose + H2O2. It catalyses the reaction D-sorbitol + O2 = D-glucose + H2O2. Its function is as follows. Oxidase that performs selective oxidation of the terminal primary hydroxyl group of several alditols, with a reduction of O2 to H2O2. Shows highest activity on xylitol and D-sorbitol, and a poor efficiency with D-mannitol and L-threitol. The sequence is that of Alditol oxidase (xyoA) from Streptomyces coelicolor (strain ATCC BAA-471 / A3(2) / M145).